The chain runs to 424 residues: N-succinylarginine dihydrolase (424 aa).

Residues 19-28, Asn110, and 137-138 each bind substrate; these read AGLSPGNIAS and HR. Glu174 is a catalytic residue. Substrate is bound at residue Arg207. His240 is a catalytic residue. Substrate is bound by residues Asp242 and Asn349. Catalysis depends on Cys355, which acts as the Nucleophile.

It belongs to the succinylarginine dihydrolase family. Homodimer.

It catalyses the reaction N(2)-succinyl-L-arginine + 2 H2O + 2 H(+) = N(2)-succinyl-L-ornithine + 2 NH4(+) + CO2. It functions in the pathway amino-acid degradation; L-arginine degradation via AST pathway; L-glutamate and succinate from L-arginine: step 2/5. Functionally, catalyzes the hydrolysis of N(2)-succinylarginine into N(2)-succinylornithine, ammonia and CO(2). The polypeptide is N-succinylarginine dihydrolase (Rhizorhabdus wittichii (strain DSM 6014 / CCUG 31198 / JCM 15750 / NBRC 105917 / EY 4224 / RW1) (Sphingomonas wittichii)).